Consider the following 656-residue polypeptide: Ankyrin repeat and SAM domain-containing protein 3 (656 aa).

The tract at residues 1-422 (MSELSDEASE…AESSPQTQRA (422 aa)) is interaction with NEK7. A phosphoserine mark is found at Ser2 and Ser5. ANK repeat units follow at residues 34–64 (DVPLDLHTAASIGQYEVVKECVQRRELDLNK), 68–97 (GGWTPLMYASYIGHDTIVHLLLEAGVSVNV), 101–130 (EGQTPLMLASSCGNESIAYFLLQQGAELEM), 134–163 (QGWTALFHCTSAGHQHMVRFLLDSGANANV), 168–197 (CGFTPLMEAAAAGHEIIVQYFLNHGVKVDA), and 201–220 (SGATARMLAKQYGHMKIVAL). A 3-hydroxyasparagine modification is found at Asn96. Ser201, Ser225, Ser243, Ser244, and Ser245 each carry phosphoserine. Disordered regions lie at residues 235–265 (SPEKYEDLSSSDESCPAPQRQRPCRKKGVSI) and 277–312 (GIGLGGRAPRPRYEQAPPRGYVTFNSSGENPLEEEG). Thr319 is subject to Phosphothreonine. Residues Ser320, Ser368, Ser371, and Ser375 each carry the phosphoserine modification. Residues 346 to 425 (GPVQSSSSSE…SPQTQRAPYS (80 aa)) are disordered. One can recognise an SAM domain in the interval 425-488 (SGPQDLAALL…TSAIARWHSS (64 aa)). The stretch at 501–526 (ADRLEAEMQELAIQLHKRCEEVEATR) forms a coiled coil. Ser541 carries the post-translational modification Phosphoserine.

As to quaternary structure, homooligomer. Interacts (via SAM domain) with ANKS6 (via SAM domain). Interacts with BICC1. Interacts with NPHP1. Interacts with NEK8. Interacts with HIF1AN. Interacts with NEK7; this interaction alters the subcellular distribution of NEK7 by preventing its nuclear translocation. In terms of processing, hydroxylated at Asn-96, most probably by HIF1AN. Phosphorylations at Ser-5, Ser-225, Thr-319, Ser-320, Ser-368 and Ser-371 occur in a NEK7-dependent manner. Post-translationally, polyubiquitinated.

Its subcellular location is the cell projection. It localises to the cilium. The protein localises to the cytoplasm. In terms of biological role, may be involved in vasopressin signaling in the kidney. The chain is Ankyrin repeat and SAM domain-containing protein 3 (ANKS3) from Homo sapiens (Human).